Here is a 92-residue protein sequence, read N- to C-terminus: Small ribosomal subunit protein uS19 (92 aa).

Belongs to the universal ribosomal protein uS19 family.

Functionally, protein S19 forms a complex with S13 that binds strongly to the 16S ribosomal RNA. The sequence is that of Small ribosomal subunit protein uS19 from Streptococcus thermophilus (strain ATCC BAA-491 / LMD-9).